A 325-amino-acid chain; its full sequence is 4-hydroxy-3-methylbut-2-enyl diphosphate reductase (325 aa).

Cys13 lines the [4Fe-4S] cluster pocket. Residues His42 and His76 each contribute to the (2E)-4-hydroxy-3-methylbut-2-enyl diphosphate site. Positions 42 and 76 each coordinate dimethylallyl diphosphate. His42 and His76 together coordinate isopentenyl diphosphate. [4Fe-4S] cluster is bound at residue Cys98. A (2E)-4-hydroxy-3-methylbut-2-enyl diphosphate-binding site is contributed by His126. Residue His126 participates in dimethylallyl diphosphate binding. Residue His126 participates in isopentenyl diphosphate binding. Glu128 serves as the catalytic Proton donor. Position 169 (Thr169) interacts with (2E)-4-hydroxy-3-methylbut-2-enyl diphosphate. A [4Fe-4S] cluster-binding site is contributed by Cys230. (2E)-4-hydroxy-3-methylbut-2-enyl diphosphate contacts are provided by Ser258, Ser259, Asn260, and Ser306. The dimethylallyl diphosphate site is built by Ser258, Ser259, Asn260, and Ser306. Isopentenyl diphosphate is bound by residues Ser258, Ser259, Asn260, and Ser306.

The protein belongs to the IspH family. It depends on [4Fe-4S] cluster as a cofactor.

It catalyses the reaction isopentenyl diphosphate + 2 oxidized [2Fe-2S]-[ferredoxin] + H2O = (2E)-4-hydroxy-3-methylbut-2-enyl diphosphate + 2 reduced [2Fe-2S]-[ferredoxin] + 2 H(+). The catalysed reaction is dimethylallyl diphosphate + 2 oxidized [2Fe-2S]-[ferredoxin] + H2O = (2E)-4-hydroxy-3-methylbut-2-enyl diphosphate + 2 reduced [2Fe-2S]-[ferredoxin] + 2 H(+). The protein operates within isoprenoid biosynthesis; dimethylallyl diphosphate biosynthesis; dimethylallyl diphosphate from (2E)-4-hydroxy-3-methylbutenyl diphosphate: step 1/1. It functions in the pathway isoprenoid biosynthesis; isopentenyl diphosphate biosynthesis via DXP pathway; isopentenyl diphosphate from 1-deoxy-D-xylulose 5-phosphate: step 6/6. Its function is as follows. Catalyzes the conversion of 1-hydroxy-2-methyl-2-(E)-butenyl 4-diphosphate (HMBPP) into a mixture of isopentenyl diphosphate (IPP) and dimethylallyl diphosphate (DMAPP). Acts in the terminal step of the DOXP/MEP pathway for isoprenoid precursor biosynthesis. In Chlorobium phaeobacteroides (strain BS1), this protein is 4-hydroxy-3-methylbut-2-enyl diphosphate reductase.